The chain runs to 145 residues: Deoxyuridine 5'-triphosphate nucleotidohydrolase (145 aa).

Substrate is bound by residues 63–65 (RSG), Gln76, and 80–82 (TVD).

This sequence belongs to the dUTPase family. The cofactor is Mg(2+).

It catalyses the reaction dUTP + H2O = dUMP + diphosphate + H(+). Its pathway is pyrimidine metabolism; dUMP biosynthesis; dUMP from dCTP (dUTP route): step 2/2. In terms of biological role, this enzyme is involved in nucleotide metabolism: it produces dUMP, the immediate precursor of thymidine nucleotides and it decreases the intracellular concentration of dUTP so that uracil cannot be incorporated into DNA. In Chlamydia muridarum (strain MoPn / Nigg), this protein is Deoxyuridine 5'-triphosphate nucleotidohydrolase.